We begin with the raw amino-acid sequence, 383 residues long: Cytochrome b (383 aa).

4 helical membrane passes run 30–50 (FGSL…LLAM), 74–96 (WILR…CHIG), 109–129 (TWIV…IGYV), and 175–195 (FFSL…AHLL). Heme b is bound by residues histidine 80 and histidine 94. 2 residues coordinate heme b: histidine 179 and histidine 193. A ubiquinone is bound at residue histidine 198. Helical transmembrane passes span 221–241 (FTIK…IIGI), 289–309 (GVLA…LDRS), 320–340 (AKFF…IGSA), and 345–365 (EPYV…FLVL).

The protein belongs to the cytochrome b family. In terms of assembly, the main subunits of complex b-c1 are: cytochrome b, cytochrome c1 and the Rieske protein. Heme b serves as cofactor.

It localises to the mitochondrion inner membrane. Functionally, component of the ubiquinol-cytochrome c reductase complex (complex III or cytochrome b-c1 complex) that is part of the mitochondrial respiratory chain. The b-c1 complex mediates electron transfer from ubiquinol to cytochrome c. Contributes to the generation of a proton gradient across the mitochondrial membrane that is then used for ATP synthesis. This chain is Cytochrome b (mt:Cyt-b), found in Trichoplax adhaerens (Trichoplax reptans).